Consider the following 210-residue polypeptide: Endo-1,4-beta-xylanase A (210 aa).

Positions 1 to 19 (MKLKKKMLTLLLTASMSFG) are cleaved as a signal peptide. The GH11 domain maps to 20-210 (LFGATSSAAT…SSGRSNVTVW (191 aa)). Residue glutamate 104 is the Nucleophile of the active site. Glutamate 197 (proton donor) is an active-site residue.

This sequence belongs to the glycosyl hydrolase 11 (cellulase G) family.

The enzyme catalyses Endohydrolysis of (1-&gt;4)-beta-D-xylosidic linkages in xylans.. The protein operates within glycan degradation; xylan degradation. The chain is Endo-1,4-beta-xylanase A (xynA) from Geobacillus stearothermophilus (Bacillus stearothermophilus).